A 542-amino-acid polypeptide reads, in one-letter code: MATTVTCTRFTDEYQLYEDIGKGAFSVVRRCVKLCTGHEYAAKIINTKKLSARDHQKLEREARICRLLKHSNIVRLHDSISEEGFHYLVFDLVTGGELFEDIVAREYYSEADASHCIQQILEAVLHCHQMGVVHRDLKPENLLLASKCKGAAVKLADFGLAIEVQGDQQAWFGFAGTPGYLSPEVLRKEAYGKPVDIWACGVILYILLVGYPPFWDEDQHKLYQQIKAGAYDFPSPEWDTVTPEAKNLINQMLTINPAKRITAHEALKHPWVCQRSTVASMMHRQETVECLKKFNARRKLKGAILTTMLATRNFSVGRQTTAPATMSTAASGTTMGLVEQAKSLLNKKADGVKPQTNSTKNSSAITSPKGSLPPAALEPQTTVIHNPVDGIKESSDSTNTTIEDEDAKARKQEIIKTTEQLIEAVNNGDFEAYAKICDPGLTSFEPEALGNLVEGMDFHRFYFENLLAKNSKPIHTTILNPHVHVIGEDAACIAYIRLTQYIDGQGRPRTSQSEETRVWHRRDGKWQNVHFHCSGAPVAPLQ.

Positions 14–272 (YQLYEDIGKG…AHEALKHPWV (259 aa)) constitute a Protein kinase domain. Tyrosine 17 carries the phosphotyrosine modification. ATP contacts are provided by residues 20 to 28 (IGKGAFSVV) and lysine 43. Catalysis depends on aspartate 136, which acts as the Proton acceptor. The autoinhibitory domain stretch occupies residues 283 to 292 (HRQETVECLK). Phosphothreonine; by autocatalysis is present on threonine 287. The tract at residues 291-301 (LKKFNARRKLK) is calmodulin-binding. Phosphothreonine; by autocatalysis is present on residues threonine 306 and threonine 307. Residues 349 to 376 (ADGVKPQTNSTKNSSAITSPKGSLPPAA) are disordered. The segment covering 354–369 (PQTNSTKNSSAITSPK) has biased composition (polar residues). Phosphoserine occurs at positions 367, 371, 394, and 397. Phosphothreonine occurs at positions 400 and 401.

Belongs to the protein kinase superfamily. CAMK Ser/Thr protein kinase family. CaMK subfamily. CAMK2 is composed of 4 different chains: alpha (CAMK2A), beta (CAMK2B), gamma (CAMK2G), and delta (CAMK2D). The different isoforms assemble into homo- or heteromultimeric holoenzymes composed of 12 subunits with two hexameric rings stacked one on top of the other. Interacts with SYNGAP1, CAMK2N2 and MPDZ. Interacts with FOXO3. Interacts (when in a kinase inactive state not associated with calmodulin) with ARC; leading to target ARC to inactive synapses. Interacts with CAMK2N1; this interaction requires CAMK2B activation by Ca(2+). Autophosphorylation of Thr-287 following activation by Ca(2+)/calmodulin. Phosphorylation of Thr-287 locks the kinase into an activated state.

It is found in the cytoplasm. The protein resides in the cytoskeleton. It localises to the microtubule organizing center. Its subcellular location is the centrosome. The protein localises to the sarcoplasmic reticulum membrane. It is found in the synapse. It catalyses the reaction L-seryl-[protein] + ATP = O-phospho-L-seryl-[protein] + ADP + H(+). The enzyme catalyses L-threonyl-[protein] + ATP = O-phospho-L-threonyl-[protein] + ADP + H(+). With respect to regulation, activated by Ca(2+)/calmodulin. Binding of calmodulin results in conformational change that relieves intrasteric autoinhibition and allows autophosphorylation of Thr-287 which turns the kinase in a constitutively active form and confers to the kinase a Ca(2+)-independent activity. Functionally, calcium/calmodulin-dependent protein kinase that functions autonomously after Ca(2+)/calmodulin-binding and autophosphorylation, and is involved in dendritic spine and synapse formation, neuronal plasticity and regulation of sarcoplasmic reticulum Ca(2+) transport in skeletal muscle. In neurons, plays an essential structural role in the reorganization of the actin cytoskeleton during plasticity by binding and bundling actin filaments in a kinase-independent manner. This structural function is required for correct targeting of CaMK2A, which acts downstream of NMDAR to promote dendritic spine and synapse formation and maintain synaptic plasticity which enables long-term potentiation (LTP) and hippocampus-dependent learning. In developing hippocampal neurons, promotes arborization of the dendritic tree and in mature neurons, promotes dendritic remodeling. Also regulates the migration of developing neurons. Participates in the modulation of skeletal muscle function in response to exercise. In slow-twitch muscles, is involved in regulation of sarcoplasmic reticulum (SR) Ca(2+) transport and in fast-twitch muscle participates in the control of Ca(2+) release from the SR through phosphorylation of triadin, a ryanodine receptor-coupling factor, and phospholamban (PLN/PLB), an endogenous inhibitor of SERCA2A/ATP2A2. In response to interferon-gamma (IFN-gamma) stimulation, catalyzes phosphorylation of STAT1, stimulating the JAK-STAT signaling pathway. Phosphorylates reticulophagy regulator RETREG1 at 'Thr-134' under endoplasmic reticulum stress conditions which enhances RETREG1 oligomerization and its membrane scission and reticulophagy activity. The protein is Calcium/calmodulin-dependent protein kinase type II subunit beta (Camk2b) of Mus musculus (Mouse).